The following is a 911-amino-acid chain: Protein translocase subunit SecA (911 aa).

Residues Gln90, 108–112 (GEGKT), and Asp515 each bind ATP. Residues Cys891, Cys893, Cys902, and His903 each contribute to the Zn(2+) site.

It belongs to the SecA family. Monomer and homodimer. Part of the essential Sec protein translocation apparatus which comprises SecA, SecYEG and auxiliary proteins SecDF-YajC and YidC. Zn(2+) is required as a cofactor.

Its subcellular location is the cell inner membrane. It is found in the cytoplasm. The enzyme catalyses ATP + H2O + cellular proteinSide 1 = ADP + phosphate + cellular proteinSide 2.. In terms of biological role, part of the Sec protein translocase complex. Interacts with the SecYEG preprotein conducting channel. Has a central role in coupling the hydrolysis of ATP to the transfer of proteins into and across the cell membrane, serving both as a receptor for the preprotein-SecB complex and as an ATP-driven molecular motor driving the stepwise translocation of polypeptide chains across the membrane. The sequence is that of Protein translocase subunit SecA from Blochmanniella pennsylvanica (strain BPEN).